A 124-amino-acid chain; its full sequence is Large ribosomal subunit protein bL12 (124 aa).

Belongs to the bacterial ribosomal protein bL12 family. As to quaternary structure, homodimer. Part of the ribosomal stalk of the 50S ribosomal subunit. Forms a multimeric L10(L12)X complex, where L10 forms an elongated spine to which 2 to 4 L12 dimers bind in a sequential fashion. Binds GTP-bound translation factors.

In terms of biological role, forms part of the ribosomal stalk which helps the ribosome interact with GTP-bound translation factors. Is thus essential for accurate translation. In Nautilia profundicola (strain ATCC BAA-1463 / DSM 18972 / AmH), this protein is Large ribosomal subunit protein bL12.